A 524-amino-acid polypeptide reads, in one-letter code: MSQLSLSWLGLGPEVAFPWQTLLLFGASWILAQILTQIYAAYRNFRRLRGFPQPPKRNWLMGHVGMVTPTEQGLKELTRLVGTYPQGFLMWIGPMVPVITLCHSDIVRSILNASAAVALKDVIFYTILKPWLGDGLLVSAGDKWSRHRRMLTPAFHFNILKPYVKIFNDSTNIMHAKWKRLISEGSSRLDMFEHVSLMTLDSLQKCVFSFDSNCQEKSSEYIAAILELSALVAKRHQQPLLFMDLLYNLTPDGMRFHKACNLVHEFTDAVIRERRRTLPDQGLDEFLKSKAKSKTLDFIDVLLLTKDEDGKELSDEDIRAEADTFMFEGHDTTASGLSWILYNLANDPEYQERCRQEVQELLRDRDPEEIEWDDLAQLPFLTMCIKESLRLHPPVTVISRCCTQDILLPDGRTIPKGIICLISIFGIHHNPSVWPDPEVYNPFRFDPENIKDSSPLAFIPFSAGPRNCIGQTFAMSEMKVALALTLLRFRLLPDDKEPRRQPELILRAEGGLWLRVEPLTAGAQ.

A helical membrane pass occupies residues 15–35 (VAFPWQTLLLFGASWILAQIL). Positions 328 and 468 each coordinate heme.

This sequence belongs to the cytochrome P450 family. Heme is required as a cofactor. In terms of tissue distribution, expressed in liver.

The protein resides in the endoplasmic reticulum membrane. It is found in the microsome membrane. The enzyme catalyses (5Z,8Z,11Z,14Z)-eicosatetraenoate + reduced [NADPH--hemoprotein reductase] + O2 = 20-hydroxy-(5Z,8Z,11Z,14Z)-eicosatetraenoate + oxidized [NADPH--hemoprotein reductase] + H2O + H(+). The catalysed reaction is 5-hydroxy-(6E,8Z,11Z,14Z)-eicosatetraenoate + reduced [NADPH--hemoprotein reductase] + O2 = 5,20-dihydroxy-(6E,8Z,11Z,14Z)-eicosatetraenoate + oxidized [NADPH--hemoprotein reductase] + H2O + H(+). It catalyses the reaction 8-hydroxy-(5Z,9E,11Z,14Z)-eicosatetraenoate + reduced [NADPH--hemoprotein reductase] + O2 = 8,20-dihydroxy-(5Z,9E,11Z,14Z)-eicosatetraenoate + oxidized [NADPH--hemoprotein reductase] + H2O + H(+). It carries out the reaction leukotriene B4 + reduced [NADPH--hemoprotein reductase] + O2 = 20-hydroxy-leukotriene B4 + oxidized [NADPH--hemoprotein reductase] + H2O + H(+). The enzyme catalyses 6-trans-leukotriene B4 + reduced [NADPH--hemoprotein reductase] + O2 = 20-hydroxy-6-trans-leukotriene B4 + oxidized [NADPH--hemoprotein reductase] + H2O + H(+). The catalysed reaction is lipoxin A4 + reduced [NADPH--hemoprotein reductase] + O2 = 20-hydroxy-lipoxin A4 + oxidized [NADPH--hemoprotein reductase] + H2O + H(+). Functionally, a cytochrome P450 monooxygenase involved in the metabolism of arachidonic acid and its oxygenated derivatives. Mechanistically, uses molecular oxygen inserting one oxygen atom into a substrate, and reducing the second into a water molecule, with two electrons provided by NADPH via cytochrome P450 reductase (CPR; NADPH-ferrihemoprotein reductase). Participates in the conversion of arachidonic acid to omega-hydroxyeicosatetraenoic acid (20-HETE), a signaling molecule acting both as vasoconstrictive and natriuretic with overall effect on arterial blood pressure. May play a role in the oxidative inactivation of eicosanoids, including both pro-inflammatory and anti-inflammatory mediators such as leukotriene B4 (LTB4), lipoxin A4 (LXA4), and several HETEs. The protein is Cytochrome P450 4F1 of Rattus norvegicus (Rat).